The sequence spans 399 residues: Enoyl-[acyl-carrier-protein] reductase [NADH] (399 aa).

Residues 48-53 (GASTGY), 74-75 (FE), 111-112 (DA), and 139-140 (LA) contribute to the NAD(+) site. Tyr-225 is a binding site for substrate. The Proton donor role is filled by Tyr-235. NAD(+) is bound by residues Lys-244 and 274–276 (VVT).

The protein belongs to the TER reductase family. In terms of assembly, monomer.

The catalysed reaction is a 2,3-saturated acyl-[ACP] + NAD(+) = a (2E)-enoyl-[ACP] + NADH + H(+). The protein operates within lipid metabolism; fatty acid biosynthesis. In terms of biological role, involved in the final reduction of the elongation cycle of fatty acid synthesis (FAS II). Catalyzes the reduction of a carbon-carbon double bond in an enoyl moiety that is covalently linked to an acyl carrier protein (ACP). This is Enoyl-[acyl-carrier-protein] reductase [NADH] from Yersinia enterocolitica serotype O:8 / biotype 1B (strain NCTC 13174 / 8081).